Consider the following 917-residue polypeptide: GTPase-activating Rap/Ran-GAP domain-like protein 3 (917 aa).

The Rap-GAP domain occupies 185–401 (LLVLEEQEGS…RTLDMLIRSL (217 aa)). Residues 483–792 (PHEVVCADSW…QLVASRSDIY (310 aa)) form the CNH domain.

Belongs to the GARNL3 family.

The protein is GTPase-activating Rap/Ran-GAP domain-like protein 3 (GARNL3) of Gallus gallus (Chicken).